The sequence spans 394 residues: Probable glycosyltransferase FCK3 (394 aa).

This sequence belongs to the afumC glycosyltransferase family.

Its pathway is secondary metabolite biosynthesis. In terms of biological role, probable glycosyl transferase; part of the gene cluster that mediates the biosynthesis of cytokinins such as fusatin, fusatinic acids or 8-oxofusatin, known for their growth promoting and anti-senescence activities toward host plants. FCK1 is a bifunctional enzyme that performs the first steps in the biosynthesis of Fusarium cytokinins. It first condenses adenosine monophosphate (AMP) with dimethylallyl diphosphate (DMAPP) to yield isoprenyl adenosine monophosphate. It then catalyzes the removal of the phosphoribose to produce isopentenylaldehyde. The cytochrome P450 monooxygenase then converts isopentenylaldehyde to trans-zeatin. A condensation step converts trans-zeatin to fusatin which is further modified to produce fusatinic acid. The mechanism for oxidation of fusatin to fusatinic acid remains unknown. 8-oxofusatin could be produced through several pathways, via direct oxygenation of fusatin, or via the 8-oxo-pentenyladenine intermediate which itself must arise from either the prenylation of 8-oxo-AMP by FCK1 and/or oxygenation of isopentenylaldehyde. Both the FCK3 and FCK4 enzymes act downstream of the identified cytokinins to produce yet unidentified compounds. This Fusarium pseudograminearum (strain CS3096) (Wheat and barley crown-rot fungus) protein is Probable glycosyltransferase FCK3.